The chain runs to 295 residues: Ribosomal RNA small subunit methyltransferase H (295 aa).

S-adenosyl-L-methionine-binding positions include glycine 32–tyrosine 34, aspartate 50, phenylalanine 77, aspartate 98, and glutamine 105. The tract at residues lysine 275 to glutamate 295 is disordered.

The protein belongs to the methyltransferase superfamily. RsmH family.

It localises to the cytoplasm. The catalysed reaction is cytidine(1402) in 16S rRNA + S-adenosyl-L-methionine = N(4)-methylcytidine(1402) in 16S rRNA + S-adenosyl-L-homocysteine + H(+). Functionally, specifically methylates the N4 position of cytidine in position 1402 (C1402) of 16S rRNA. In Anaplasma phagocytophilum (strain HZ), this protein is Ribosomal RNA small subunit methyltransferase H.